The sequence spans 387 residues: Small ribosomal subunit protein uS5m (387 aa).

Residues 1–22 (MLRSFSHFLQIGSRRQPTYFRC) constitute a mitochondrion transit peptide. The tract at residues 33–87 (FKNDPKKELNSNLNEKSVEESSKNETKEQFNSSSIPRESESEGKTASNTSPLSPK) is disordered. The segment covering 48–60 (KSVEESSKNETKE) has biased composition (basic and acidic residues). At S85 the chain carries Phosphoserine. The S5 DRBM domain maps to 225–288 (LMFVPLVRRR…GRAVKNMVYI (64 aa)).

Belongs to the universal ribosomal protein uS5 family. In terms of assembly, component of the mitochondrial small ribosomal subunit (mt-SSU). Mature yeast 74S mitochondrial ribosomes consist of a small (37S) and a large (54S) subunit. The 37S small subunit contains a 15S ribosomal RNA (15S mt-rRNA) and at least 32 different proteins. The 54S large subunit contains a 21S rRNA (21S mt-rRNA) and at least 45 different proteins. uS3m, uS4m and uS5m form the narrow entry site of the mRNA channel.

The protein localises to the mitochondrion. Component of the mitochondrial ribosome (mitoribosome), a dedicated translation machinery responsible for the synthesis of mitochondrial genome-encoded proteins, including at least some of the essential transmembrane subunits of the mitochondrial respiratory chain. The mitoribosomes are attached to the mitochondrial inner membrane and translation products are cotranslationally integrated into the membrane. The polypeptide is Small ribosomal subunit protein uS5m (mrp5) (Schizosaccharomyces pombe (strain 972 / ATCC 24843) (Fission yeast)).